The chain runs to 485 residues: UDP-N-acetylmuramate--L-alanine ligase (485 aa).

120–126 is a binding site for ATP; the sequence is GSHGKTT.

It belongs to the MurCDEF family.

The protein resides in the cytoplasm. It carries out the reaction UDP-N-acetyl-alpha-D-muramate + L-alanine + ATP = UDP-N-acetyl-alpha-D-muramoyl-L-alanine + ADP + phosphate + H(+). It participates in cell wall biogenesis; peptidoglycan biosynthesis. Functionally, cell wall formation. The chain is UDP-N-acetylmuramate--L-alanine ligase from Rickettsia massiliae (strain Mtu5).